The following is a 443-amino-acid chain: Anamorsin homolog (443 aa).

Residues 136–301 (LSSAPRVLVL…AAGVADALSG (166 aa)) form an N-terminal SAM-like domain region. The tract at residues 302–331 (NRGALPNGTAQTDGDDFIDESTLIDPTESY) is linker. Residues C341, C348, C351, and C353 each contribute to the [2Fe-2S] cluster site. The interval 341-353 (CASRPKACPNCTC) is fe-S binding site A. 4 residues coordinate [4Fe-4S] cluster: C380, C383, C391, and C394. Short sequence motifs (cx2C motif) lie at residues 380–383 (CGNC) and 391–394 (CAGC). Positions 380 to 394 (CGNCYLGDAFRCAGC) are fe-S binding site B.

This sequence belongs to the anamorsin family. Monomer. Requires [2Fe-2S] cluster as cofactor. [4Fe-4S] cluster serves as cofactor.

It localises to the cytoplasm. The protein resides in the mitochondrion intermembrane space. In terms of biological role, component of the cytosolic iron-sulfur (Fe-S) protein assembly (CIA) machinery. Required for the maturation of extramitochondrial Fe-S proteins. Part of an electron transfer chain functioning in an early step of cytosolic Fe-S biogenesis, facilitating the de novo assembly of a [4Fe-4S] cluster on the cytosolic Fe-S scaffold complex. Electrons are transferred from NADPH via a FAD- and FMN-containing diflavin oxidoreductase. Together with the diflavin oxidoreductase, also required for the assembly of the diferric tyrosyl radical cofactor of ribonucleotide reductase (RNR), probably by providing electrons for reduction during radical cofactor maturation in the catalytic small subunit. The sequence is that of Anamorsin homolog from Toxoplasma gondii (strain ATCC 50861 / VEG).